Consider the following 318-residue polypeptide: Protein OPG137 (318 aa).

Residues 145–172 (VYDKDKRIQMLEDEVVNLRNQRSNTKSS) are a coiled coil.

It belongs to the orthopoxvirus OPG137 family. In terms of assembly, homomultimer. Interacts with OPG160. Post-translationally, phosphorylated by a OPG054-independent mechanism.

It is found in the host cytoplasm. Required for viral crescent formation early during virus morphogenesis. This is Protein OPG137 (OPG137) from Vaccinia virus (strain Ankara) (VACV).